The following is a 108-amino-acid chain: MAPKKDKVPPPSSKPAKSGGGKQKKKKWSKGKQKEKVNNMVLFDQATYDKLLSEAPKFKLITPSILSDRLRINGSLARRAIRELMAKGTIRMVSAHSSQQIYTRATHG.

The segment at 1 to 36 (MAPKKDKVPPPSSKPAKSGGGKQKKKKWSKGKQKEK) is disordered. Residues 22–31 (KQKKKKWSKG) are compositionally biased toward basic residues.

This sequence belongs to the eukaryotic ribosomal protein eS25 family.

The sequence is that of Small ribosomal subunit protein eS25x (RPS25D) from Arabidopsis thaliana (Mouse-ear cress).